The chain runs to 253 residues: Testis-expressed protein 47 (253 aa).

Testis-specific.

The protein is Testis-expressed protein 47 of Homo sapiens (Human).